An 820-amino-acid polypeptide reads, in one-letter code: Penicillin-binding protein 1A (820 aa).

The disordered stretch occupies residues 1–120; it reads MNSDGRHHQS…PAGRLPQPRV (120 aa). The segment covering 41-53 has biased composition (basic and acidic residues); the sequence is TDDRSAPHADSIE. A helical transmembrane segment spans residues 139-159; the sequence is LTAAVVILLPMVTFTMAYLIV. The segment at 180-360 is transglycosylase; sequence GSEIAKIVPP…RWNWVLDGMV (181 aa). E213 serves as the catalytic Proton donor; for transglycosylase activity. Positions 453–743 are transpeptidase; sequence AVVSIDPHNG…PSDIWKATMD (291 aa). S487 serves as the catalytic Acyl-ester intermediate; for transpeptidase activity. Positions 792–804 are enriched in low complexity; that stretch reads ITIPIGPPTTITL. The segment at 792–820 is disordered; sequence ITIPIGPPTTITLAPPPPAPPAATPTPPP. The span at 805–820 shows a compositional bias: pro residues; the sequence is APPPPAPPAATPTPPP.

The protein in the N-terminal section; belongs to the glycosyltransferase 51 family. It in the C-terminal section; belongs to the transpeptidase family. Interacts with RipA via its transpeptidase domain (residues 561-820).

The protein localises to the cell membrane. The catalysed reaction is [GlcNAc-(1-&gt;4)-Mur2Ac(oyl-L-Ala-gamma-D-Glu-L-Lys-D-Ala-D-Ala)](n)-di-trans,octa-cis-undecaprenyl diphosphate + beta-D-GlcNAc-(1-&gt;4)-Mur2Ac(oyl-L-Ala-gamma-D-Glu-L-Lys-D-Ala-D-Ala)-di-trans,octa-cis-undecaprenyl diphosphate = [GlcNAc-(1-&gt;4)-Mur2Ac(oyl-L-Ala-gamma-D-Glu-L-Lys-D-Ala-D-Ala)](n+1)-di-trans,octa-cis-undecaprenyl diphosphate + di-trans,octa-cis-undecaprenyl diphosphate + H(+). It carries out the reaction Preferential cleavage: (Ac)2-L-Lys-D-Ala-|-D-Ala. Also transpeptidation of peptidyl-alanyl moieties that are N-acyl substituents of D-alanine.. It participates in cell wall biogenesis; peptidoglycan biosynthesis. In terms of biological role, cell wall formation. Synthesis of cross-linked peptidoglycan from the lipid intermediates. The enzyme has a penicillin-insensitive transglycosylase N-terminal domain (formation of linear glycan strands) and a penicillin-sensitive transpeptidase C-terminal domain (cross-linking of the peptide subunits). Has little peptidoglycan hydrolytic activity; however it inhibits the synergistic peptidoglycan hydrolysis of RipA plus RpfB. In Mycobacterium tuberculosis (strain ATCC 25618 / H37Rv), this protein is Penicillin-binding protein 1A (ponA1).